Reading from the N-terminus, the 270-residue chain is Glucan endo-1,3-beta-glucosidase (270 aa).

The signal sequence occupies residues 1–18 (MNAFTFPLLLAFCAFAHG). One can recognise a GH16 domain in the interval 22-270 (LDWEDEFNGG…VEYVKKWTWN (249 aa)). E137 functions as the Nucleophile in the catalytic mechanism. Catalysis depends on E142, which acts as the Proton donor.

This sequence belongs to the glycosyl hydrolase 16 family.

The protein resides in the secreted. The catalysed reaction is Hydrolysis of (1-&gt;3)-beta-D-glucosidic linkages in (1-&gt;3)-beta-D-glucans.. Ca(2+) does not affect the enzyme activity nor the thermostability. Other cations, such as Mg(2+), Mn(2+), Cu(2+), Zn(2+), Ag(+) or Hg(2+) do not cause any serious adverse effect on the activity. Also no significant change in the activity in response to the addition of 1 mM EDTA. Its function is as follows. Hydrolyzes laminarin majorily to glucose (G1), laminaribiose (L2), laminaritriose (L3), laminaritetraose (L4) and laminaripentaose (L5). Hydrolyzes laminarioligosaccharides L3, L4, L5 and laminarihexaose (L6) to G1, L2 and L3. Hardly hydrolyzes L2. Does not hydrolyze lichenan, pustulan, carboxymethyl cellulose, locust bean gum or soluble starch. The polypeptide is Glucan endo-1,3-beta-glucosidase (Cryptopygus antarcticus (Antarctic springtail)).